The sequence spans 834 residues: DNA polymerase I, thermostable (834 aa).

The 5'-3' exonuclease domain occupies 176 to 262 (RPEQWVDFRA…DLPLEVDLAQ (87 aa)). The tract at residues 412-834 (ERLHRNLLKR…MGEDWLSAKG (423 aa)) is polymerase.

Belongs to the DNA polymerase type-A family.

The enzyme catalyses DNA(n) + a 2'-deoxyribonucleoside 5'-triphosphate = DNA(n+1) + diphosphate. In addition to polymerase activity, this DNA polymerase exhibits 5'-3' exonuclease activity. This is DNA polymerase I, thermostable (polA) from Thermus thermophilus (strain ATCC 27634 / DSM 579 / HB8).